The sequence spans 269 residues: G-protein coupled receptor homolog C3 (269 aa).

A disulfide bridge links Cys-28 with Cys-107. Transmembrane regions (helical) follow at residues 30-50, 71-91, 123-143, 165-185, and 200-220; these read IMSV…TLMS, IGIL…SPVS, LMQI…FVYC, IVLM…IVLM, and HLCL…ISLA.

This sequence belongs to the G-protein coupled receptor 1 family.

The protein resides in the host cell membrane. In Sus scrofa (Pig), this protein is G-protein coupled receptor homolog C3.